We begin with the raw amino-acid sequence, 317 residues long: Transaldolase (317 aa).

K126 (schiff-base intermediate with substrate) is an active-site residue.

It belongs to the transaldolase family. Type 1 subfamily. As to quaternary structure, homodimer.

It localises to the cytoplasm. The enzyme catalyses D-sedoheptulose 7-phosphate + D-glyceraldehyde 3-phosphate = D-erythrose 4-phosphate + beta-D-fructose 6-phosphate. The protein operates within carbohydrate degradation; pentose phosphate pathway; D-glyceraldehyde 3-phosphate and beta-D-fructose 6-phosphate from D-ribose 5-phosphate and D-xylulose 5-phosphate (non-oxidative stage): step 2/3. Functionally, transaldolase is important for the balance of metabolites in the pentose-phosphate pathway. This Burkholderia lata (strain ATCC 17760 / DSM 23089 / LMG 22485 / NCIMB 9086 / R18194 / 383) protein is Transaldolase.